A 318-amino-acid polypeptide reads, in one-letter code: Thymidylate synthase (318 aa).

DUMP-binding positions include Arg-25 and Arg-180–Arg-181. Catalysis depends on Cys-200, which acts as the Nucleophile. DUMP contacts are provided by residues Arg-220–Asp-223, Asn-231, and His-261–Tyr-263. Asp-223 serves as a coordination point for (6R)-5,10-methylene-5,6,7,8-tetrahydrofolate. (6R)-5,10-methylene-5,6,7,8-tetrahydrofolate is bound at residue Ala-317.

It belongs to the thymidylate synthase family. Bacterial-type ThyA subfamily. As to quaternary structure, homodimer.

It is found in the cytoplasm. The catalysed reaction is dUMP + (6R)-5,10-methylene-5,6,7,8-tetrahydrofolate = 7,8-dihydrofolate + dTMP. It functions in the pathway pyrimidine metabolism; dTTP biosynthesis. Its function is as follows. Catalyzes the reductive methylation of 2'-deoxyuridine-5'-monophosphate (dUMP) to 2'-deoxythymidine-5'-monophosphate (dTMP) while utilizing 5,10-methylenetetrahydrofolate (mTHF) as the methyl donor and reductant in the reaction, yielding dihydrofolate (DHF) as a by-product. This enzymatic reaction provides an intracellular de novo source of dTMP, an essential precursor for DNA biosynthesis. In Ligilactobacillus salivarius (strain UCC118) (Lactobacillus salivarius), this protein is Thymidylate synthase.